Reading from the N-terminus, the 218-residue chain is 7-cyano-7-deazaguanine synthase (218 aa).

ATP is bound at residue F9 to L19. Residues C185, C193, C196, and C199 each contribute to the Zn(2+) site.

The protein belongs to the QueC family. The cofactor is Zn(2+).

It carries out the reaction 7-carboxy-7-deazaguanine + NH4(+) + ATP = 7-cyano-7-deazaguanine + ADP + phosphate + H2O + H(+). Its pathway is purine metabolism; 7-cyano-7-deazaguanine biosynthesis. In terms of biological role, catalyzes the ATP-dependent conversion of 7-carboxy-7-deazaguanine (CDG) to 7-cyano-7-deazaguanine (preQ(0)). The polypeptide is 7-cyano-7-deazaguanine synthase (Pseudoalteromonas atlantica (strain T6c / ATCC BAA-1087)).